We begin with the raw amino-acid sequence, 299 residues long: ATP phosphoribosyltransferase (299 aa).

This sequence belongs to the ATP phosphoribosyltransferase family. Long subfamily. Requires Mg(2+) as cofactor.

Its subcellular location is the cytoplasm. It catalyses the reaction 1-(5-phospho-beta-D-ribosyl)-ATP + diphosphate = 5-phospho-alpha-D-ribose 1-diphosphate + ATP. Its pathway is amino-acid biosynthesis; L-histidine biosynthesis; L-histidine from 5-phospho-alpha-D-ribose 1-diphosphate: step 1/9. Its activity is regulated as follows. Feedback inhibited by histidine. Catalyzes the condensation of ATP and 5-phosphoribose 1-diphosphate to form N'-(5'-phosphoribosyl)-ATP (PR-ATP). Has a crucial role in the pathway because the rate of histidine biosynthesis seems to be controlled primarily by regulation of HisG enzymatic activity. In Shewanella pealeana (strain ATCC 700345 / ANG-SQ1), this protein is ATP phosphoribosyltransferase.